A 203-amino-acid polypeptide reads, in one-letter code: Interferon type B (203 aa).

An N-terminal signal peptide occupies residues 1-27 (MTANHQSPGMHSILLLLLLPALTTTFS). 2 disulfide bridges follow: cysteine 28/cysteine 125 and cysteine 57/cysteine 164. N-linked (GlcNAc...) asparagine glycosylation is found at asparagine 37 and asparagine 160.

It belongs to the alpha/beta interferon family.

It localises to the secreted. In terms of biological role, has antiviral activities. The chain is Interferon type B (IFNB) from Gallus gallus (Chicken).